Reading from the N-terminus, the 279-residue chain is Energy-coupling factor transporter ATP-binding protein EcfA1 (279 aa).

The ABC transporter domain maps to 5 to 240 (IELNNIQFNY…GEALVEMGLD (236 aa)). Position 40 to 47 (40 to 47 (GHNGSGKS)) interacts with ATP.

The protein belongs to the ABC transporter superfamily. Energy-coupling factor EcfA family. As to quaternary structure, forms a stable energy-coupling factor (ECF) transporter complex composed of 2 membrane-embedded substrate-binding proteins (S component), 2 ATP-binding proteins (A component) and 2 transmembrane proteins (T component).

The protein localises to the cell membrane. Its function is as follows. ATP-binding (A) component of a common energy-coupling factor (ECF) ABC-transporter complex. Unlike classic ABC transporters this ECF transporter provides the energy necessary to transport a number of different substrates. The polypeptide is Energy-coupling factor transporter ATP-binding protein EcfA1 (Enterococcus faecalis (strain ATCC 700802 / V583)).